A 235-amino-acid polypeptide reads, in one-letter code: Uridylate kinase (235 aa).

9 to 12 serves as a coordination point for ATP; the sequence is KISG. Residue Gly-50 coordinates UMP. Residues Gly-51 and Arg-55 each contribute to the ATP site. UMP-binding positions include Asp-70 and 131–138; that span reads TGFPYFTT. The ATP site is built by Asn-159, Tyr-165, and Asp-168.

This sequence belongs to the UMP kinase family. Homohexamer; trimer of dimers.

It localises to the cytoplasm. The enzyme catalyses UMP + ATP = UDP + ADP. It functions in the pathway pyrimidine metabolism; CTP biosynthesis via de novo pathway; UDP from UMP (UMPK route): step 1/1. With respect to regulation, unlike other bacteria, is not activated by GTP. UTP is a competitive inhibitor against UMP and a non-competitive inhibitor toward ATP. Its function is as follows. Catalyzes the reversible phosphorylation of UMP to UDP, with ATP as the most efficient phosphate donor. Is also able to phosphorylate dUMP. The protein is Uridylate kinase (pyrH) of Ureaplasma parvum serovar 3 (strain ATCC 700970).